A 272-amino-acid chain; its full sequence is B3 domain-containing protein Os10g0323000 (272 aa).

A DNA-binding region (TF-B3 1) is located at residues 39-132; the sequence is RYGENRKHGQ…TLDLLILDKH (94 aa). The segment at 139–171 is disordered; it reads PPSKRDLKLKSKRSTHQDSKGHPSNTDPGPSRI. Basic and acidic residues predominate over residues 141-159; it reads SKRDLKLKSKRSTHQDSKG. Residues 180-272 constitute a DNA-binding region (TF-B3 2); sequence ESSANTQLLV…THLGVIVDIF (93 aa).

Its subcellular location is the nucleus. The protein is B3 domain-containing protein Os10g0323000 of Oryza sativa subsp. japonica (Rice).